The sequence spans 397 residues: Mannonate dehydratase (397 aa).

Belongs to the mannonate dehydratase family. The cofactor is Fe(2+). Mn(2+) is required as a cofactor.

The enzyme catalyses D-mannonate = 2-dehydro-3-deoxy-D-gluconate + H2O. The protein operates within carbohydrate metabolism; pentose and glucuronate interconversion. Its function is as follows. Catalyzes the dehydration of D-mannonate. This chain is Mannonate dehydratase, found in Yersinia pestis bv. Antiqua (strain Angola).